The primary structure comprises 1173 residues: 3-hydroxy-3-methylglutaryl coenzyme A reductase mlcD (1173 aa).

N-linked (GlcNAc...) asparagine glycosylation is found at Asn143 and Asn186. In terms of domain architecture, SSD spans 241–420 (DVVVMVLGYI…FTFYTAILSI (180 aa)). The next 7 membrane-spanning stretches (helical) occupy residues 242-262 (VVVM…LFLS), 272-292 (LATS…DVAI), 302-322 (LLSE…SITL), 368-388 (NIVC…VLGI), 397-417 (VLAA…YTAI), 479-499 (FWMV…TLFQ), and 594-614 (VLSK…SYLF). Residues 498-673 (FQASSSGSLS…FTPTTTDSDS (176 aa)) are linker. Residues 647-666 (NQTPQIQSSLQAPQTRVFTP) are compositionally biased toward polar residues. A disordered region spans residues 647–669 (NQTPQIQSSLQAPQTRVFTPTTT). Residues 674-1133 (DASLVLIKAS…LVKAHMAHNR (460 aa)) form a catalytic region. The active-site Charge relay system is Glu822. An N-linked (GlcNAc...) asparagine glycan is attached at Asn886. Lys956 functions as the Charge relay system in the catalytic mechanism. Asn997 carries N-linked (GlcNAc...) asparagine glycosylation. Residue Asp1032 is the Charge relay system of the active site. The Proton donor role is filled by His1128. N-linked (GlcNAc...) asparagine glycosylation occurs at Asn1132. A disordered region spans residues 1132–1173 (NRSAPASSAPSRSVSPSGGTRTVPVPNNALRPSAAATDRARR). Positions 1133–1148 (RSAPASSAPSRSVSPS) are enriched in low complexity.

Belongs to the HMG-CoA reductase family.

The protein resides in the endoplasmic reticulum membrane. The enzyme catalyses (R)-mevalonate + 2 NADP(+) + CoA = (3S)-3-hydroxy-3-methylglutaryl-CoA + 2 NADPH + 2 H(+). It functions in the pathway polyketide biosynthesis. HMG-CoA reductase; part of the gene cluster that mediates the biosynthesis of compactin, also known as mevastatin or ML-236B, and which acts as a potent competitive inhibitor of HMG-CoA reductase. Compactin biosynthesis is performed in two stages. The first stage is catalyzed by the nonaketide synthase mlcA, which belongs to type I polyketide synthases and catalyzes the iterative nine-step formation of the polyketide. This PKS stage is completed by the action of dehydrogenase mlcG, which catalyzes the NADPH-dependent reduction of the unsaturated tetra-, penta- and heptaketide intermediates that arise during the mlcA-mediated biosynthesis of the nonaketide chain and leads to dihydro-ML-236C carboxylate. Covalently bound dihydro-ML-236C carboxylate is released from mlcA by the mlcF esterase. Conversion of dihydro-ML-236C carboxylate into ML-236A carboxylate is subsequently performed with the participation of molecular oxygen and P450 monoogygenase mlcC. Finally, mlcH performs the conversion of ML-236A carboxylate to ML-236B/compactin carboxylate through the addition of the side-chain diketide moiety produced by the diketide synthase mlcB. HMG-CoA reductase mlcD may act as a down-regulator of compactin production and is involved in conferring resistance to ML-236B/compactin. This is 3-hydroxy-3-methylglutaryl coenzyme A reductase mlcD from Penicillium citrinum.